Consider the following 31-residue polypeptide: Morintide mO3 (31 aa).

Residues 1 to 30 (NRLCCSQYGFCGTTSEYCSRANGCQSNCWG) enclose the Chitin-binding type-1 domain. Disulfide bonds link cysteine 4-cysteine 18 and cysteine 24-cysteine 28.

In terms of tissue distribution, seeds (at protein level).

In terms of biological role, chitin-binding protein which functions in defense against chitin-containing fungal pathogens. This Moringa oleifera (Horseradish tree) protein is Morintide mO3.